We begin with the raw amino-acid sequence, 338 residues long: Tetraacyldisaccharide 4'-kinase (338 aa).

67–74 (IAGGAGKT) serves as a coordination point for ATP.

It belongs to the LpxK family.

The catalysed reaction is a lipid A disaccharide + ATP = a lipid IVA + ADP + H(+). It participates in glycolipid biosynthesis; lipid IV(A) biosynthesis; lipid IV(A) from (3R)-3-hydroxytetradecanoyl-[acyl-carrier-protein] and UDP-N-acetyl-alpha-D-glucosamine: step 6/6. Transfers the gamma-phosphate of ATP to the 4'-position of a tetraacyldisaccharide 1-phosphate intermediate (termed DS-1-P) to form tetraacyldisaccharide 1,4'-bis-phosphate (lipid IVA). The chain is Tetraacyldisaccharide 4'-kinase from Acidovorax ebreus (strain TPSY) (Diaphorobacter sp. (strain TPSY)).